The sequence spans 614 residues: 1-deoxy-D-xylulose-5-phosphate synthase (614 aa).

Thiamine diphosphate contacts are provided by residues H74 and 115–117 (AHS). Residue D146 participates in Mg(2+) binding. Residues 147–148 (GA), N175, Y282, and E363 each bind thiamine diphosphate. A Mg(2+)-binding site is contributed by N175.

The protein belongs to the transketolase family. DXPS subfamily. Homodimer. Mg(2+) serves as cofactor. It depends on thiamine diphosphate as a cofactor.

The catalysed reaction is D-glyceraldehyde 3-phosphate + pyruvate + H(+) = 1-deoxy-D-xylulose 5-phosphate + CO2. Its pathway is metabolic intermediate biosynthesis; 1-deoxy-D-xylulose 5-phosphate biosynthesis; 1-deoxy-D-xylulose 5-phosphate from D-glyceraldehyde 3-phosphate and pyruvate: step 1/1. Functionally, catalyzes the acyloin condensation reaction between C atoms 2 and 3 of pyruvate and glyceraldehyde 3-phosphate to yield 1-deoxy-D-xylulose-5-phosphate (DXP). In Nitrosomonas europaea (strain ATCC 19718 / CIP 103999 / KCTC 2705 / NBRC 14298), this protein is 1-deoxy-D-xylulose-5-phosphate synthase.